The sequence spans 202 residues: Peroxynitrite isomerase (202 aa).

The GXWXGXG motif lies at 21 to 27; it reads GEWEGRG. Residue His193 participates in heme b binding.

The protein belongs to the nitrobindin family. In terms of assembly, homodimer. Heme b serves as cofactor.

It carries out the reaction peroxynitrite = nitrate. Its pathway is nitrogen metabolism. Heme-binding protein able to scavenge peroxynitrite and to protect free L-tyrosine against peroxynitrite-mediated nitration, by acting as a peroxynitrite isomerase that converts peroxynitrite to nitrate. Therefore, this protein likely plays a role in peroxynitrite sensing and in the detoxification of reactive nitrogen and oxygen species (RNS and ROS, respectively). Is able to bind nitric oxide (NO) in vitro, but may act as a sensor of peroxynitrite levels in vivo. This chain is Peroxynitrite isomerase, found in Pseudarthrobacter chlorophenolicus (strain ATCC 700700 / DSM 12829 / CIP 107037 / JCM 12360 / KCTC 9906 / NCIMB 13794 / A6) (Arthrobacter chlorophenolicus).